The chain runs to 408 residues: Aminoacylase-1A (408 aa).

Histidine 80 serves as a coordination point for Zn(2+). Aspartate 82 is a catalytic residue. Aspartate 113 is a Zn(2+) binding site. The Proton acceptor role is filled by glutamate 147. Zn(2+) is bound by residues glutamate 148, glutamate 175, and histidine 373. Serine 408 is subject to Phosphoserine.

Belongs to the peptidase M20A family. Homodimer. Zn(2+) is required as a cofactor. In terms of processing, the N-terminus is blocked.

It localises to the cytoplasm. It carries out the reaction an N-acyl-L-amino acid + H2O = an L-alpha-amino acid + a carboxylate. The catalysed reaction is an N-acetyl-L-cysteine-S-conjugate + H2O = an S-substituted L-cysteine + acetate. In terms of biological role, involved in the hydrolysis of N-acylated or N-acetylated amino acids (except L-aspartate). This chain is Aminoacylase-1A (Acy1a), found in Rattus norvegicus (Rat).